Consider the following 507-residue polypeptide: ATP synthase subunit alpha, chloroplastic (507 aa).

An ATP-binding site is contributed by 170-177 (GDRQTGKT).

It belongs to the ATPase alpha/beta chains family. As to quaternary structure, F-type ATPases have 2 components, CF(1) - the catalytic core - and CF(0) - the membrane proton channel. CF(1) has five subunits: alpha(3), beta(3), gamma(1), delta(1), epsilon(1). CF(0) has four main subunits: a, b, b' and c.

It is found in the plastid. The protein localises to the chloroplast thylakoid membrane. The enzyme catalyses ATP + H2O + 4 H(+)(in) = ADP + phosphate + 5 H(+)(out). Its function is as follows. Produces ATP from ADP in the presence of a proton gradient across the membrane. The alpha chain is a regulatory subunit. This chain is ATP synthase subunit alpha, chloroplastic, found in Anthoceros angustus (Hornwort).